We begin with the raw amino-acid sequence, 268 residues long: NADPH-dependent 7-cyano-7-deazaguanine reductase (268 aa).

Residue 79–81 participates in substrate binding; it reads VES. 81–82 is a binding site for NADPH; that stretch reads SK. Cysteine 176 functions as the Thioimide intermediate in the catalytic mechanism. The active-site Proton donor is aspartate 183. A substrate-binding site is contributed by 215–216; that stretch reads HE. 244–245 lines the NADPH pocket; that stretch reads RG.

It belongs to the GTP cyclohydrolase I family. QueF type 2 subfamily. As to quaternary structure, homodimer.

It is found in the cytoplasm. It carries out the reaction 7-aminomethyl-7-carbaguanine + 2 NADP(+) = 7-cyano-7-deazaguanine + 2 NADPH + 3 H(+). It functions in the pathway tRNA modification; tRNA-queuosine biosynthesis. Catalyzes the NADPH-dependent reduction of 7-cyano-7-deazaguanine (preQ0) to 7-aminomethyl-7-deazaguanine (preQ1). In Saccharophagus degradans (strain 2-40 / ATCC 43961 / DSM 17024), this protein is NADPH-dependent 7-cyano-7-deazaguanine reductase.